The primary structure comprises 593 residues: Probable translation initiation factor IF-2 (593 aa).

Positions 7 to 221 (IRTPIVCVMG…VLIGLAQRYM (215 aa)) constitute a tr-type G domain. Positions 16-23 (GHVDHGKT) are G1. 16–23 (GHVDHGKT) contributes to the GTP binding site. The interval 41–45 (EITQH) is G2. Residues 77 to 80 (DTPG) form a G3 region. GTP is bound by residues 77 to 81 (DTPGH) and 131 to 134 (NKVD). Positions 131–134 (NKVD) are G4. Residues 199–201 (SAL) are G5.

This sequence belongs to the TRAFAC class translation factor GTPase superfamily. Classic translation factor GTPase family. IF-2 subfamily.

Functionally, function in general translation initiation by promoting the binding of the formylmethionine-tRNA to ribosomes. Seems to function along with eIF-2. The polypeptide is Probable translation initiation factor IF-2 (Methanoculleus marisnigri (strain ATCC 35101 / DSM 1498 / JR1)).